A 417-amino-acid chain; its full sequence is Phosphoglycerate kinase (417 aa).

Residues 24 to 26 (DLN), Arg-44, 67 to 70 (HLGR), Arg-126, and Arg-170 contribute to the substrate site. Residues Lys-220, Gly-316, Glu-347, and 373–376 (GGDS) contribute to the ATP site.

It belongs to the phosphoglycerate kinase family. In terms of assembly, monomer.

The protein resides in the cytoplasm. It carries out the reaction (2R)-3-phosphoglycerate + ATP = (2R)-3-phospho-glyceroyl phosphate + ADP. It participates in carbohydrate degradation; glycolysis; pyruvate from D-glyceraldehyde 3-phosphate: step 2/5. The chain is Phosphoglycerate kinase from Renibacterium salmoninarum (strain ATCC 33209 / DSM 20767 / JCM 11484 / NBRC 15589 / NCIMB 2235).